A 166-amino-acid polypeptide reads, in one-letter code: Regulatory protein RecX (166 aa).

This sequence belongs to the RecX family.

It is found in the cytoplasm. In terms of biological role, modulates RecA activity. The chain is Regulatory protein RecX from Salmonella paratyphi C (strain RKS4594).